A 210-amino-acid chain; its full sequence is 3-hydroxy-3-methylglutaryl-coenzyme A reductase 2 (210 aa).

Active-site charge relay system residues include K21 and D97. A helical membrane pass occupies residues 166–186; that stretch reads LLATIVAGSVLAGELSLMSAI. H195 acts as the Proton donor in catalysis. N-linked (GlcNAc...) asparagine glycosylation is present at N199.

It belongs to the HMG-CoA reductase family.

Its subcellular location is the endoplasmic reticulum membrane. It is found in the mitochondrion membrane. The protein localises to the plastid membrane. It carries out the reaction (R)-mevalonate + 2 NADP(+) + CoA = (3S)-3-hydroxy-3-methylglutaryl-CoA + 2 NADPH + 2 H(+). The protein operates within metabolic intermediate biosynthesis; (R)-mevalonate biosynthesis; (R)-mevalonate from acetyl-CoA: step 3/3. Its function is as follows. Catalyzes the synthesis of mevalonate. The specific precursor of all isoprenoid compounds present in plants. In Hevea brasiliensis (Para rubber tree), this protein is 3-hydroxy-3-methylglutaryl-coenzyme A reductase 2 (HMGR2).